Reading from the N-terminus, the 205-residue chain is Beta-crystallin B2 (205 aa).

Position 2 is an N-acetylalanine (Ala2). The N-terminal arm stretch occupies residues Ala2–Ser16. Beta/gamma crystallin 'Greek key' domains lie at Ser17 to Ser56 and Gly57 to Lys101. Residues Val102–Glu106 form a connecting peptide region. Beta/gamma crystallin 'Greek key' domains are found at residues His107–Ser148 and Gly149–Arg191. The interval Met193–Asn205 is C-terminal arm.

The protein belongs to the beta/gamma-crystallin family. In terms of assembly, homo/heterodimer, or complexes of higher-order. The structure of beta-crystallin oligomers seems to be stabilized through interactions between the N-terminal arms. Post-translationally, the N-terminus is blocked.

Functionally, crystallins are the dominant structural components of the vertebrate eye lens. This is Beta-crystallin B2 from Aquarana catesbeiana (American bullfrog).